Consider the following 720-residue polypeptide: Methionine--tRNA ligase (720 aa).

A 'HIGH' region motif is present at residues 27 to 37 (PYANGQIHIGH). The Zn(2+) site is built by Cys-158, Cys-161, Cys-171, and Cys-174. Residues 348–352 (KMSKS) carry the 'KMSKS' region motif. Residue Lys-351 coordinates ATP. The tRNA-binding domain occupies 614–720 (DFAKVDLRIA…SGAKPGMRVK (107 aa)).

Belongs to the class-I aminoacyl-tRNA synthetase family. MetG type 1 subfamily. As to quaternary structure, homodimer. Requires Zn(2+) as cofactor.

It localises to the cytoplasm. It catalyses the reaction tRNA(Met) + L-methionine + ATP = L-methionyl-tRNA(Met) + AMP + diphosphate. Functionally, is required not only for elongation of protein synthesis but also for the initiation of all mRNA translation through initiator tRNA(fMet) aminoacylation. The sequence is that of Methionine--tRNA ligase from Burkholderia ambifaria (strain MC40-6).